A 391-amino-acid polypeptide reads, in one-letter code: Leucine aminopeptidase 1 (391 aa).

Positions Met-1 to Ala-19 are cleaved as a signal peptide. Positions Ala-20 to Val-91 are excised as a propeptide. The N-linked (GlcNAc...) asparagine glycan is linked to Asn-183. Residues His-191 and Asp-210 each coordinate Zn(2+). Asn-235 carries an N-linked (GlcNAc...) asparagine glycan. Residues Glu-249 and Asp-276 each contribute to the Zn(2+) site. An intrachain disulfide couples Cys-325 to Cys-329. His-358 is a Zn(2+) binding site.

The protein belongs to the peptidase M28 family. M28E subfamily. Monomer. Zn(2+) serves as cofactor.

The protein localises to the secreted. Extracellular aminopeptidase that allows assimilation of proteinaceous substrates. In Aspergillus niger (strain ATCC MYA-4892 / CBS 513.88 / FGSC A1513), this protein is Leucine aminopeptidase 1 (lap1).